Here is a 151-residue protein sequence, read N- to C-terminus: Large ribosomal subunit protein uL13 (151 aa).

Belongs to the universal ribosomal protein uL13 family. As to quaternary structure, part of the 50S ribosomal subunit.

Functionally, this protein is one of the early assembly proteins of the 50S ribosomal subunit, although it is not seen to bind rRNA by itself. It is important during the early stages of 50S assembly. This chain is Large ribosomal subunit protein uL13, found in Synechococcus elongatus (strain ATCC 33912 / PCC 7942 / FACHB-805) (Anacystis nidulans R2).